A 200-amino-acid chain; its full sequence is Golgi to ER traffic protein 1 (200 aa).

Over 1-6 (MEPYTL) the chain is Lumenal. Residues 7-26 (LLFIFVIQIVKQIISAVGKQ) form a helical membrane-spanning segment. Residues 27–113 (SIESISWVLY…KVNTFTGYLI (87 aa)) lie on the Cytoplasmic side of the membrane. Positions 75–107 (AKWTKLNRQHDKLVAEIEQLQKEVDLDKVKVNT) form a coiled coil. Residues 114 to 134 (AILTSIPIWFFRVWYRSVVLF) traverse the membrane as a helical segment. Residues 135-158 (YFPPGILPRALEWSIALPFTVTGG) lie on the Lumenal side of the membrane. A helical membrane pass occupies residues 159 to 175 (VSLTVWMMAAGAVASSL). The Cytoplasmic portion of the chain corresponds to 176 to 200 (TFLFMFPFEKAVPKPVLAKKSPQQL).

The protein belongs to the WRB/GET1 family. As to quaternary structure, component of the Golgi to ER traffic (GET) complex, which is composed of GET1, GET2 and GET3. Within the complex, GET1 and GET2 form a heterotetramer which is stabilized by phosphatidylinositol binding and which binds to the GET3 homodimer.

It localises to the endoplasmic reticulum membrane. The protein resides in the golgi apparatus membrane. In terms of biological role, required for the post-translational delivery of tail-anchored (TA) proteins to the endoplasmic reticulum. Together with GET2, acts as a membrane receptor for soluble GET3, which recognizes and selectively binds the transmembrane domain of TA proteins in the cytosol. The GET complex cooperates with the HDEL receptor ERD2 to mediate the ATP-dependent retrieval of resident ER proteins that contain a C-terminal H-D-E-L retention signal from the Golgi to the ER. The polypeptide is Golgi to ER traffic protein 1 (Meyerozyma guilliermondii (strain ATCC 6260 / CBS 566 / DSM 6381 / JCM 1539 / NBRC 10279 / NRRL Y-324) (Yeast)).